A 164-amino-acid polypeptide reads, in one-letter code: Phosphopantetheine adenylyltransferase (164 aa).

S9 contributes to the substrate binding site. Residues 9-10 and H17 each bind ATP; that span reads SF. Substrate is bound by residues K41, L73, and K87. ATP-binding positions include 88–90, E98, and 122–128; these read GLR and YSYLSSS.

It belongs to the bacterial CoaD family. In terms of assembly, homohexamer. The cofactor is Mg(2+).

The protein resides in the cytoplasm. It carries out the reaction (R)-4'-phosphopantetheine + ATP + H(+) = 3'-dephospho-CoA + diphosphate. The protein operates within cofactor biosynthesis; coenzyme A biosynthesis; CoA from (R)-pantothenate: step 4/5. Reversibly transfers an adenylyl group from ATP to 4'-phosphopantetheine, yielding dephospho-CoA (dPCoA) and pyrophosphate. This chain is Phosphopantetheine adenylyltransferase, found in Rhodococcus jostii (strain RHA1).